The primary structure comprises 455 residues: Chromosomal replication initiator protein DnaA (455 aa).

Residues 1 to 74 (MFDIEKFWQH…IQSAYGYAGI (74 aa)) are domain I, interacts with DnaA modulators. A domain II region spans residues 74 to 117 (IEILPVFQINENNDSPERIVTPEPRYAIQLQQEKRAHKQFTKNL). The segment at 118–334 (KLNEKYTFDN…GALVKVQAYA (217 aa)) is domain III, AAA+ region. Positions 162, 164, 165, and 166 each coordinate ATP. Positions 335–455 (TIERADINVN…VFDLKQMIEH (121 aa)) are domain IV, binds dsDNA.

This sequence belongs to the DnaA family. Oligomerizes as a right-handed, spiral filament on DNA at oriC.

Its subcellular location is the cytoplasm. Plays an essential role in the initiation and regulation of chromosomal replication. ATP-DnaA binds to the origin of replication (oriC) to initiate formation of the DNA replication initiation complex once per cell cycle. Binds the DnaA box (a 9 base pair repeat at the origin) and separates the double-stranded (ds)DNA. Forms a right-handed helical filament on oriC DNA; dsDNA binds to the exterior of the filament while single-stranded (ss)DNA is stabiized in the filament's interior. The ATP-DnaA-oriC complex binds and stabilizes one strand of the AT-rich DNA unwinding element (DUE), permitting loading of DNA polymerase. After initiation quickly degrades to an ADP-DnaA complex that is not apt for DNA replication. Binds acidic phospholipids. The chain is Chromosomal replication initiator protein DnaA from Lactobacillus helveticus (strain DPC 4571).